A 105-amino-acid chain; its full sequence is Replication initiation control protein YabA (105 aa).

The Zn(2+) site is built by His79, Cys81, Cys95, and Cys98.

The protein belongs to the YabA family. As to quaternary structure, homotetramer. Interacts with both DnaA and DnaN, acting as a bridge between these two proteins. Requires Zn(2+) as cofactor.

The protein localises to the cytoplasm. Its subcellular location is the nucleoid. Involved in control of chromosome replication initiation. Inhibits the cooperative binding of DnaA to the oriC region, thus negatively regulating initiation of chromosome replication. Inhibits the ability of DnaA-ATP to form a helix on DNA; does not disassemble preformed DnaA-DNA helices. Decreases the residence time of DnaA on the chromosome at its binding sites (oriC, replication forks and promoter-binding sites). Tethers DnaA to the replication machinery via the DNA polymerase beta sliding clamp subunit (dnaN). Associates with oriC and other DnaA targets on the chromosome in a DnaA-dependent manner. This is Replication initiation control protein YabA from Streptococcus sanguinis (strain SK36).